A 332-amino-acid chain; its full sequence is Glyceraldehyde-3-phosphate dehydrogenase 1 (332 aa).

NAD(+) is bound by residues Arg-11, Ile-12, Asp-33, and Thr-120. D-glyceraldehyde 3-phosphate is bound by residues 149–151, Thr-180, 209–210, and Arg-232; these read SCT and TG. Cys-150 (nucleophile) is an active-site residue. 2 residues coordinate NAD(+): Asn-314 and Tyr-318.

It belongs to the glyceraldehyde-3-phosphate dehydrogenase family. In terms of assembly, homotetramer.

It is found in the cytoplasm. It catalyses the reaction D-glyceraldehyde 3-phosphate + phosphate + NAD(+) = (2R)-3-phospho-glyceroyl phosphate + NADH + H(+). The enzyme catalyses NADH + H2O = (6R)-NADHX. It carries out the reaction NADH + H2O = (6S)-NADHX. The catalysed reaction is NADPH + H2O = (6R)-NADPHX. It catalyses the reaction NADPH + H2O = (6S)-NADPHX. It participates in carbohydrate degradation; glycolysis; pyruvate from D-glyceraldehyde 3-phosphate: step 1/5. In terms of biological role, glyceraldehyde-3-phosphate dehydrogenase (GAPDH) involved in glycolysis and gluconeogenesis. Catalyzes the reaction of glyceraldehyde-3-phosphate to 1,3 bis-phosphoglycerate. The contribution of the TDH1, TDH2, and TDH3 to the total glyceraldehyde-3-phosphate dehydrogenase activity is 10-15, 25-30, and 50-60%, respectively. May be involved in a process other than glycolysis because it is synthesized by cells in stationary phase. As a side activity, catalyzes the hydration of the nicotinamide ring of NADH or NADPH at the C6 position to give the corresponding hydrates, NADHX and NADPHX, which exist as R and S epimers, that cannot act as electron donors or acceptors and inhibit several dehydrogenases, making them toxic. This Saccharomyces cerevisiae (strain ATCC 204508 / S288c) (Baker's yeast) protein is Glyceraldehyde-3-phosphate dehydrogenase 1.